The primary structure comprises 492 residues: Thyroid hormone receptor alpha (492 aa).

The interval 1–33 (MEQKPSKVECGSDPEENSARSPDGKRKRKNGQC) is disordered. The tract at residues 1-52 (MEQKPSKVECGSDPEENSARSPDGKRKRKNGQCPLKSSMSGYIPSYLDKDEQ) is modulating. The Zn(2+) site is built by Cys53, Cys56, Cys70, Cys73, Cys91, Cys97, Cys107, and Cys110. 2 consecutive NR C4-type zinc fingers follow at residues 53–73 (CVVCGDKATGYHYRCITCEGC) and 91–115 (CKYDSCCVIDKITRNQCQLCRFKKC). Residues 53-127 (CVVCGDKATG…VGMAMDLVLD (75 aa)) constitute a DNA-binding region (nuclear receptor). Positions 163–407 (EEWDLIHVAT…EGQQLLGMHV (245 aa)) constitute an NR LBD domain. 2 residues coordinate 3,3',5-triiodo-L-thyronine: Arg228 and Ser277. A disordered region spans residues 457–492 (AVCGEDDSSEASSLSSSSSDEDTEVFEDLAGKAASP).

The protein belongs to the nuclear hormone receptor family. NR1 subfamily. In terms of assembly, binds DNA as a dimer; homodimer and heterodimer with RXRB. Interacts with NCOA3 and NCOA6 coactivators, leading to a strong increase of transcription of target genes. Probably interacts with SFPQ. Interacts with C1D. Interacts with AKAP13. Interacts with TP53INP2. Interacts with PER2. Isoform alpha-2 and isoform alpha-1 interact with TACC1, but the interaction with alpha-1 is weaker. The interaction with isoform alpha-1, but not alpha-2, is decreased in the presence of thyroid hormone T3.

The protein resides in the nucleus. It is found in the cytoplasm. Functionally, nuclear hormone receptor that can act as a repressor or activator of transcription. High affinity receptor for thyroid hormones, including triiodothyronine and thyroxine. The protein is Thyroid hormone receptor alpha (Thra) of Rattus norvegicus (Rat).